The primary structure comprises 515 residues: Envelope glycoprotein (515 aa).

An N-terminal signal peptide occupies residues 1-33 (MPKERRSRRRPEPIIRWVSLTLTLLALCQPIQT). The Extracellular portion of the chain corresponds to 34-435 (WRCSLSLGNQ…LGLTAWVRET (402 aa)). Residues Asn-129 and Asn-203 are each glycosylated (N-linked (GlcNAc...) asparagine; by host). A CXXC motif is present at residues 212-215 (CAIC). Intrachain disulfides connect Cys-212–Cys-215, Cys-212–Cys-392, and Cys-384–Cys-391. Residues Asn-230, Asn-251, Asn-256, Asn-271, and Asn-287 are each glycosylated (N-linked (GlcNAc...) asparagine; by host). Residues 304 to 324 (VAALTLGLALSVGLTGIKVAV) form a fusion peptide region. 2 coiled-coil regions span residues 330-376 (QRLT…WLYI) and 388-420 (NEPCCFLRIQNDSIIRLGDLQPLSQRVSTDWQW). Residue Asn-351 is glycosylated (N-linked (GlcNAc...) asparagine; by host). The tract at residues 365 to 381 (AQNRRGLDWLYIRLGFQ) is immunosuppression. The CX6CC signature appears at 384 to 392 (CPTINEPCC). A glycan (N-linked (GlcNAc...) asparagine; by host) is linked at Asn-398. The chain crosses the membrane as a helical span at residues 436–456 (IHSVLSLFLLALLLLFLAPCL). Cys-455 carries the S-palmitoyl cysteine; by host lipid modification. Residues 457–515 (IKCLTSRLSKLLRQAPHFPEISFPPKPDSDYQALLPSAPEIYSHLSPTKPDYINLRPCP) are Cytoplasmic-facing.

In terms of assembly, the mature envelope protein (Env) consists of a trimer of SU-TM heterodimers attached by a labile interchain disulfide bond. Specific enzymatic cleavages in vivo yield mature proteins. Envelope glycoproteins are synthesized as an inactive precursor that is N-glycosylated and processed likely by host cell furin or by a furin-like protease in the Golgi to yield the mature SU and TM proteins. The cleavage site between SU and TM requires the minimal sequence [KR]-X-[KR]-R. Post-translationally, the CXXC motif is highly conserved across a broad range of retroviral envelope proteins. It is thought to participate in the formation of a labile disulfide bond possibly with the CX6CC motif present in the transmembrane protein. Isomerization of the intersubunit disulfide bond to an SU intrachain disulfide bond is thought to occur upon receptor recognition in order to allow membrane fusion. In terms of processing, the transmembrane protein is palmitoylated.

The protein resides in the virion membrane. Its subcellular location is the host cell membrane. Functionally, the surface protein (SU) attaches the virus to the host cell by binding to its receptor. This interaction triggers the refolding of the transmembrane protein (TM) and is thought to activate its fusogenic potential by unmasking its fusion peptide. Fusion occurs at the host cell plasma membrane. In terms of biological role, the transmembrane protein (TM) acts as a class I viral fusion protein. Under the current model, the protein has at least 3 conformational states: pre-fusion native state, pre-hairpin intermediate state, and post-fusion hairpin state. During viral and target cell membrane fusion, the coiled coil regions (heptad repeats) assume a trimer-of-hairpins structure, positioning the fusion peptide in close proximity to the C-terminal region of the ectodomain. The formation of this structure appears to drive apposition and subsequent fusion of viral and target cell membranes. Membranes fusion leads to delivery of the nucleocapsid into the cytoplasm. The polypeptide is Envelope glycoprotein (env) (Bovine leukemia virus (isolate Australian) (BLV)).